The chain runs to 161 residues: Nucleotide-binding protein Bmul_0741/BMULJ_02519 (161 aa).

It belongs to the YajQ family.

Nucleotide-binding protein. This is Nucleotide-binding protein Bmul_0741/BMULJ_02519 from Burkholderia multivorans (strain ATCC 17616 / 249).